A 687-amino-acid chain; its full sequence is Sphingoid long chain base kinase 5 (687 aa).

Residues 1-20 (MTLKPSKRRKGRSRHSRKKQ) are disordered. 2 S-palmitoyl cysteine; by AKR1 lipidation sites follow: C91 and C94. Basic and acidic residues predominate over residues 101–116 (IDRSETSTTDTSKDDL). Disordered stretches follow at residues 101–130 (IDRSETSTTDTSKDDLSANPKLHYPSVNGQ) and 180–207 (DELESSQKKERKGNSLSRGSNSSSSLLT). Over residues 193-207 (NSLSRGSNSSSSLLT) the composition is skewed to low complexity. Positions 266–405 (RRNKSIFVII…IDLMCCSQPS (140 aa)) constitute a DAGKc domain. Residues 276-278 (NPF) and T308 each bind ATP. 333 to 336 (SGDG) is a binding site for substrate. The active-site Proton donor/acceptor is the D335. Residues E340, 366–368 (GSG), R434, and R440 each bind ATP. Positions 506–524 (EYETENEDEDEDADADDED) are enriched in acidic residues. The segment at 506–525 (EYETENEDEDEDADADDEDS) is disordered. 652-654 (DGE) is a binding site for ATP.

The protein localises to the golgi apparatus membrane. It catalyses the reaction (4R)-hydroxysphinganine + ATP = (4R)-hydroxysphinganine 1-phosphate + ADP + H(+). The catalysed reaction is a sphingoid base + ATP = a sphingoid 1-phosphate + ADP + H(+). It carries out the reaction sphinganine + ATP = sphinganine 1-phosphate + ADP + H(+). Catalyzes the phosphorylation of the sphingoid long chain bases dihydrosphingosine (DHS or sphinganine) and phytosphingosine (PHS) to form dihydrosphingosine 1-phosphate (DHS-1P) and phytosphingosine 1-phosphate (PHS-1P) respectively. Redundant to LCB4, is only responsible for few percent of the total activity. Involved in the biosynthesis of sphingolipids and ceramides. Involved in heat-induced transient cell cycle arrest. Accumulation of phosphorylated sphingoid long chain bases (LCBPs) stimulates calcium influx and activates calcineurin signaling. Involved in heat-stress resistance. In Saccharomyces cerevisiae (strain ATCC 204508 / S288c) (Baker's yeast), this protein is Sphingoid long chain base kinase 5 (LCB5).